The following is a 351-amino-acid chain: UPF0104 membrane protein MTH_887 (351 aa).

Helical transmembrane passes span 20–40 (IVLS…FAGF), 51–71 (SPYF…LWTL), 137–157 (VFEF…IMTW), 165–185 (IVVS…VYAG), 244–264 (FVIG…RLYV), 275–295 (AVPL…PILP), 304–324 (ILVG…AASV), and 328–348 (IASY…YGKQ).

It belongs to the UPF0104 family.

It is found in the cell membrane. This is UPF0104 membrane protein MTH_887 from Methanothermobacter thermautotrophicus (strain ATCC 29096 / DSM 1053 / JCM 10044 / NBRC 100330 / Delta H) (Methanobacterium thermoautotrophicum).